Reading from the N-terminus, the 452-residue chain is Scaffold protein ILK (452 aa).

M1 is modified (N-acetylmethionine). ANK repeat units follow at residues 2-30 (DDIFTQCREGNAVAVRLWLDNTENDLNQG), 31-63 (DDHGFSPLHWACREGRSAVVEMLIMRGARINVM), 64-96 (NRGDDTPLHLAASHGHRDIVQKLLQYKADINAV), 97-129 (NEHGNVPLHYACFWGQDQVAEDLVANGALVSIC), and 130-174 (NKYG…GTTR). Residues 33–139 (HGFSPLHWAC…NKYGEMPVDK (107 aa)) form an interaction with LIMS1 region. Position 173 is a phosphothreonine (T173). The segment at 180–212 (GTLNKHSGIDFKQLNFLAKLNENHSGELWKGRW) is PH-like; mediates interaction with TGFB1I1. The residue at position 186 (S186) is a Phosphoserine. A Protein kinase domain is found at 193-446 (LNFLAKLNEN…PKFDMIVPIL (254 aa)). ATP-binding residues include N200, N202, H203, and S204. The residue at position 246 (S246) is a Phosphoserine. 3 residues coordinate ATP: H270, M272, and N279. Residue D339 coordinates Mg(2+). Position 341 (K341) interacts with ATP. Positions 363–371 (KKPEDTNRR) match the Nuclear localization signal motif. K426 is modified (N6-acetyllysine).

The protein belongs to the protein kinase superfamily. TKL Ser/Thr protein kinase family. As to quaternary structure, component of the heterotrimeric IPP (ILK-PINCH-PARVIN) complex composed of ILK, LIMS1/PINCH and PARVA; the complex binds to F-actin via the C-terminal tail of LIMS1 and the N-terminal region of PARVA, promoting F-actin filament bundling. Formation of the IPP complex is dependent on protein kinase C and precedes integrin-mediated cell adhesion and spreading. ILK also interacts with LIMS2/PINCH2 and with PARVB and PARVG which may substitute for LIMS1 and PARVA in the IPP complex; PARVA and PARVB compete for the same binding site. Interaction with PARVG promotes the establishment of cell polarity required for leukocyte migration. Interacts with the cytoplasmic domain of integrin ITGB1 and may also interact with integrins ITGB2, ITGB3 and/or ITGB5. Interacts probably also with TGFB1I1. Interacts (via ANK repeats) with EPHA1 (via SAM domain); stimulated by EFNA1 but independent of the kinase activity of EPHA1. Interacts with FERMT2. Interacts with LIMD2; leading to activate the protein kinase activity. Interacts with PXN/PAXILLIN (via LD motif 4). Interacts with CCDC25 (via cytoplasmic region); initiating the ILK-PARVB cascade to induce cytoskeleton rearrangement and directional migration of cells. Interacts with IQGAP1; the interaction is required for localization of IQGAP1 to the cell cortex. Post-translationally, phosphorylation by PAK1 modulates ILK subcellular location by promoting its nuclear export. In terms of tissue distribution, highly expressed in lung, heart, kidney, liver, brain, spleen and skeletal muscle. Weakly expressed in testis.

It is found in the cell junction. The protein resides in the focal adhesion. Its subcellular location is the cell membrane. The protein localises to the cytoplasm. It localises to the myofibril. It is found in the sarcomere. The protein resides in the cell projection. Its subcellular location is the lamellipodium. The protein localises to the nucleus. It localises to the cytoskeleton. It is found in the microtubule organizing center. The protein resides in the centrosome. Its subcellular location is the cell cortex. Its function is as follows. Scaffold protein which mediates protein-protein interactions during a range of cellular events including focal adhesion assembly, cell adhesion and cell migration. Regulates integrin-mediated signal transduction by contributing to inside-out integrin activation. Recruits PARVA and LIMS1/PITCH to form the heterotrimeric IPP (ILK-PINCH-PARVIN) complex which binds to F-actin via the C-terminal tail of LIMS1 and the N-terminal region of PARVA, promoting F-actin filament bundling, a process required to generate force for actin cytoskeleton reorganization and subsequent dynamic cell adhesion events such as cell spreading and migration. Binding to PARVA promotes effective assembly of ILK into focal adhesions while PARVA-bound ILK can simultaneously engage integrin-beta cytoplasmic tails to mediate cell adhesion. Plays a role with PARVG in promoting the cell adhesion and spreading of leukocytes. Acts as an upstream effector of both AKT1/PKB and GSK3. Mediates trafficking of caveolae to the cell surface in an ITGB1-dependent manner by promoting the recruitment of IQGAP1 to the cell cortex which cooperates with its effector DIAPH1 to locally stabilize microtubules and allow stable insertion of caveolae into the plasma membrane. Required for the maintenance of mitotic spindle integrity by promoting phosphorylation of TACC3 by AURKA. Associates with chromatin and may act as a negative regulator of transcription when located in the nucleus. The polypeptide is Scaffold protein ILK (Mus musculus (Mouse)).